The chain runs to 371 residues: DNA replication and repair protein RecF (371 aa).

30 to 37 contacts ATP; that stretch reads GENAQGKT.

This sequence belongs to the RecF family.

It localises to the cytoplasm. In terms of biological role, the RecF protein is involved in DNA metabolism; it is required for DNA replication and normal SOS inducibility. RecF binds preferentially to single-stranded, linear DNA. It also seems to bind ATP. The sequence is that of DNA replication and repair protein RecF from Staphylococcus haemolyticus (strain JCSC1435).